The chain runs to 265 residues: tRNA pseudouridine synthase A (265 aa).

Catalysis depends on aspartate 58, which acts as the Nucleophile. A substrate-binding site is contributed by tyrosine 116.

The protein belongs to the tRNA pseudouridine synthase TruA family. Homodimer.

It carries out the reaction uridine(38/39/40) in tRNA = pseudouridine(38/39/40) in tRNA. Formation of pseudouridine at positions 38, 39 and 40 in the anticodon stem and loop of transfer RNAs. This is tRNA pseudouridine synthase A from Neisseria meningitidis serogroup C / serotype 2a (strain ATCC 700532 / DSM 15464 / FAM18).